Here is a 143-residue protein sequence, read N- to C-terminus: Large ribosomal subunit protein uL13 (143 aa).

This sequence belongs to the universal ribosomal protein uL13 family. In terms of assembly, part of the 50S ribosomal subunit.

This protein is one of the early assembly proteins of the 50S ribosomal subunit, although it is not seen to bind rRNA by itself. It is important during the early stages of 50S assembly. In Albidiferax ferrireducens (strain ATCC BAA-621 / DSM 15236 / T118) (Rhodoferax ferrireducens), this protein is Large ribosomal subunit protein uL13.